Consider the following 896-residue polypeptide: Protein translocase subunit SecA (896 aa).

Residues Q87, 105–109 (GEGKT), and D507 each bind ATP. Residues 855 to 879 (LSENDEASETQTFRRQEKKIGRNDP) are disordered. Over residues 866–876 (TFRRQEKKIGR) the composition is skewed to basic and acidic residues. Zn(2+) is bound by residues C880, C882, C891, and H892.

It belongs to the SecA family. Monomer and homodimer. Part of the essential Sec protein translocation apparatus which comprises SecA, SecYEG and auxiliary proteins SecDF-YajC and YidC. The cofactor is Zn(2+).

It is found in the cell inner membrane. Its subcellular location is the cytoplasm. It catalyses the reaction ATP + H2O + cellular proteinSide 1 = ADP + phosphate + cellular proteinSide 2.. Its function is as follows. Part of the Sec protein translocase complex. Interacts with the SecYEG preprotein conducting channel. Has a central role in coupling the hydrolysis of ATP to the transfer of proteins into and across the cell membrane, serving both as a receptor for the preprotein-SecB complex and as an ATP-driven molecular motor driving the stepwise translocation of polypeptide chains across the membrane. The protein is Protein translocase subunit SecA of Legionella pneumophila (strain Lens).